The sequence spans 81 residues: uncharacterized protein (81 aa).

This is an uncharacterized protein from Synechocystis sp. (strain ATCC 27184 / PCC 6803 / Kazusa).